The sequence spans 271 residues: Ribonuclease HII (271 aa).

The RNase H type-2 domain occupies 84–271 (VLIAGVDEVG…HRMSFLSNYI (188 aa)). The a divalent metal cation site is built by Asp-90, Glu-91, and Asp-187.

Belongs to the RNase HII family. Requires Mn(2+) as cofactor. Mg(2+) serves as cofactor.

It is found in the cytoplasm. It catalyses the reaction Endonucleolytic cleavage to 5'-phosphomonoester.. Functionally, endonuclease that specifically degrades the RNA of RNA-DNA hybrids. The protein is Ribonuclease HII of Clostridium tetani (strain Massachusetts / E88).